The primary structure comprises 443 residues: Serine/threonine-protein phosphatase 2A 55 kDa regulatory subunit B beta isoform (443 aa).

WD repeat units follow at residues 22–61 (TEAD…KNQV), 87–128 (EIEE…KRPE), 171–209 (AHTY…QSFN), and 220–260 (ELTE…LCDR). S275 is modified (phosphoserine). WD repeat units lie at residues 279-317 (EIIS…RPIE), 334-375 (ENDC…DVTL), and 410-442 (DFSK…QDKV). Y295 bears the Phosphotyrosine mark. T298 carries the post-translational modification Phosphothreonine.

Belongs to the phosphatase 2A regulatory subunit B family. PP2A consists of a common heterodimeric core enzyme, composed of a 36 kDa catalytic subunit (subunit C) and a 65 kDa constant regulatory subunit (PR65 or subunit A), that associates with a variety of regulatory subunits. Proteins that associate with the core dimer include three families of regulatory subunits B (the R2/B/PR55/B55, R3/B''/PR72/PR130/PR59 and R5/B'/B56 families), the 48 kDa variable regulatory subunit, viral proteins, and cell signaling molecules. Interacts with TOMM22. Interacts with IER5 (via N- and C-terminal regions).

The protein localises to the cytoplasm. Its subcellular location is the cytoskeleton. The protein resides in the membrane. The B regulatory subunit might modulate substrate selectivity and catalytic activity, and might also direct the localization of the catalytic enzyme to a particular subcellular compartment. The chain is Serine/threonine-protein phosphatase 2A 55 kDa regulatory subunit B beta isoform (PPP2R2B) from Bos taurus (Bovine).